The sequence spans 174 residues: MTIILGIDPGSRVTGYGLIKESDRKIAYIDSGCIRTSNDTELSHKLLQIYDGICELMDHYSPTEVAIEQIFMHNNPNSALKLGHARGVAMVAAASHRAKIFEYSAREIKQSVVGYGAAEKDQVSHMVVELLQLNRAPQKDAADALAIAICHSHMRNGLSKLIGSRGTKRRRMRL.

Active-site residues include aspartate 8, glutamate 68, and aspartate 140. Mg(2+)-binding residues include aspartate 8, glutamate 68, and aspartate 140.

This sequence belongs to the RuvC family. As to quaternary structure, homodimer which binds Holliday junction (HJ) DNA. The HJ becomes 2-fold symmetrical on binding to RuvC with unstacked arms; it has a different conformation from HJ DNA in complex with RuvA. In the full resolvosome a probable DNA-RuvA(4)-RuvB(12)-RuvC(2) complex forms which resolves the HJ. Requires Mg(2+) as cofactor.

The protein localises to the cytoplasm. The catalysed reaction is Endonucleolytic cleavage at a junction such as a reciprocal single-stranded crossover between two homologous DNA duplexes (Holliday junction).. The RuvA-RuvB-RuvC complex processes Holliday junction (HJ) DNA during genetic recombination and DNA repair. Endonuclease that resolves HJ intermediates. Cleaves cruciform DNA by making single-stranded nicks across the HJ at symmetrical positions within the homologous arms, yielding a 5'-phosphate and a 3'-hydroxyl group; requires a central core of homology in the junction. The consensus cleavage sequence is 5'-(A/T)TT(C/G)-3'. Cleavage occurs on the 3'-side of the TT dinucleotide at the point of strand exchange. HJ branch migration catalyzed by RuvA-RuvB allows RuvC to scan DNA until it finds its consensus sequence, where it cleaves and resolves the cruciform DNA. The sequence is that of Crossover junction endodeoxyribonuclease RuvC from Legionella pneumophila subsp. pneumophila (strain Philadelphia 1 / ATCC 33152 / DSM 7513).